Here is a 244-residue protein sequence, read N- to C-terminus: 1-(5-phosphoribosyl)-5-[(5-phosphoribosylamino)methylideneamino] imidazole-4-carboxamide isomerase (244 aa).

The active-site Proton acceptor is aspartate 10. The active-site Proton donor is the aspartate 129.

It belongs to the HisA/HisF family.

It is found in the cytoplasm. The enzyme catalyses 1-(5-phospho-beta-D-ribosyl)-5-[(5-phospho-beta-D-ribosylamino)methylideneamino]imidazole-4-carboxamide = 5-[(5-phospho-1-deoxy-D-ribulos-1-ylimino)methylamino]-1-(5-phospho-beta-D-ribosyl)imidazole-4-carboxamide. It participates in amino-acid biosynthesis; L-histidine biosynthesis; L-histidine from 5-phospho-alpha-D-ribose 1-diphosphate: step 4/9. This is 1-(5-phosphoribosyl)-5-[(5-phosphoribosylamino)methylideneamino] imidazole-4-carboxamide isomerase from Rhodococcus jostii (strain RHA1).